Here is a 318-residue protein sequence, read N- to C-terminus: Sensor histidine kinase NatK (318 aa).

A run of 3 helical transmembrane segments spans residues 4–24, 27–47, and 72–82; these read LFQC…AAAF, STAA…LYIW, and VGVVLIGTDIM. The 187-residue stretch at 132–318 folds into the Histidine kinase domain; that stretch reads RNHDTMKHIT…RLEIKIPFQK (187 aa). A Phosphohistidine; by autocatalysis modification is found at H134.

The protein resides in the cell membrane. The enzyme catalyses ATP + protein L-histidine = ADP + protein N-phospho-L-histidine.. In terms of biological role, member of the two-component regulatory system NatK/NatR that positively regulates the expression of the natAB operon. Potentially phosphorylates NatR. This chain is Sensor histidine kinase NatK, found in Bacillus subtilis (strain 168).